The following is a 489-amino-acid chain: Endothelial zinc finger protein induced by tumor necrosis factor alpha (489 aa).

Residues 1 to 15 (MKELDPKNDISEDKL) are compositionally biased toward basic and acidic residues. 2 disordered regions span residues 1–61 (MKEL…PLGI) and 98–122 (EKGA…KPPM). 13 C2H2-type zinc fingers span residues 130–152 (YDCS…QRIH), 158–180 (FECD…QRVH), 186–208 (YACG…QRTH), 214–236 (YVCD…ERIH), 242–264 (YACG…QRTH), 270–292 (YVCP…QRTH), 298–320 (YACK…QRNH), 326–348 (YVCG…QRFH), 354–376 (FECS…QRIH), 382–404 (YECY…QIVH), 410–432 (YVCG…QRIH), 438–460 (YRCG…QRIH), and 466–488 (YRCG…LRIH).

It belongs to the krueppel C2H2-type zinc-finger protein family. Highly expressed in placenta, followed by brain, testis, pancreas, heart, small intestine, muscle, uterus, prostate and peripheral blood leukocytes. Not detected in liver, lung, colon, stomach, salivary and thyroid gland.

The protein resides in the nucleus. In terms of biological role, may be involved in transcriptional regulation. The chain is Endothelial zinc finger protein induced by tumor necrosis factor alpha (ZNF71) from Homo sapiens (Human).